The primary structure comprises 800 residues: Isoamylase 2, chloroplastic (800 aa).

Over residues 1 to 10 (MASLPAPPTP) the composition is skewed to pro residues. A disordered region spans residues 1–22 (MASLPAPPTPLGSCPRGRGGGR). Residues 1 to 34 (MASLPAPPTPLGSCPRGRGGGRVVARPRRAGLAC) constitute a chloroplast transit peptide.

This sequence belongs to the glycosyl hydrolase 13 family. Forms a hetero-hexamer composed of five ISA1 and one ISA2. As to expression, highly expressed in developing endosperm and leaves.

The protein localises to the plastid. The protein resides in the chloroplast. The enzyme catalyses Hydrolysis of (1-&gt;6)-alpha-D-glucosidic branch linkages in glycogen, amylopectin and their beta-limit dextrins.. Functionally, starch-debranching enzyme involved in amylopectin biosynthesis in endosperm. Functions by removing excess branches or improper branches that interfere with the formation of double helices of the cluster chains of amylopectin and crystallization of starch. Works together with ISA1 as heterooligomer. The heterooligomer ISA1 and ISA2 possesses higher affinity than the ISA1 homooligomer for various branched polyglucans in vitro, but no marked differences exist in chain preferences for debranching of amylopectin and phytoglycogen between these forms. The protein is Isoamylase 2, chloroplastic of Oryza sativa subsp. japonica (Rice).